Consider the following 137-residue polypeptide: Major seminal plasma glycoprotein PSP-II (137 aa).

An N-terminal signal peptide occupies residues 1–21; the sequence is MKLGTAIPWALLLSTATLVST. 2 disulfides stabilise this stretch: Cys30-Cys51 and Cys74-Cys95. The CUB domain occupies 30–131; it reads CGRVIKDTSG…SPFLIYFYGS (102 aa). Residue Asn119 is glycosylated (N-linked (GlcNAc...) (complex) asparagine).

As to quaternary structure, monomer or heterodimer with PSP-I (depending on the type of glycosylation of PSP-I). In terms of tissue distribution, seminal plasma or sperm.

It is found in the secreted. The polypeptide is Major seminal plasma glycoprotein PSP-II (Sus scrofa (Pig)).